Reading from the N-terminus, the 400-residue chain is Large envelope protein (400 aa).

At M1 the chain carries N-acetylmethionine. Disordered regions lie at residues 1-54 (MGGW…HWPE) and 85-116 (LTTV…RDSH). G2 is lipidated: N-myristoyl glycine; by host. Residues 2–119 (GGWSSKPRQG…PPLRDSHPQA (118 aa)) are pre-S1. A pre-S region spans residues 2–174 (GGWSSKPRQG…FSRTGDPAPN (173 aa)). Topologically, residues 2–181 (GGWSSKPRQG…APNMENTTSG (180 aa)) are virion surface; in external conformation. Topologically, residues 2 to 253 (GGWSSKPRQG…PGYRWMCLRR (252 aa)) are intravirion; in internal conformation. W4 is a glycosylation site (N-linked (GlcNAc...) asparagine). Residues 96–106 (STNRQSGRQPT) are compositionally biased toward polar residues. The pre-S2 stretch occupies residues 120 to 174 (MQWNSTTFHQALLDPRVRGLYFPAGGSSSGTVNPVPTTASPISSIFSRTGDPAPN). The chain crosses the membrane as a helical span at residues 182–202 (FLGPLLVLQAGFFLLTRILTI). Over 203 to 253 (PQSLDSWWTSLNFLGGAPTCPGQNSQSPTSNHSPTSCPPICPGYRWMCLRR) the chain is Intravirion; in external conformation. The chain crosses the membrane as a helical span at residues 254–274 (FIIFLFILLLCLIFLLVLLDY). The Virion surface segment spans residues 275-348 (QGMLPVCPLL…WASVRFSWLS (74 aa)). N320 carries an N-linked (GlcNAc...) asparagine; by host glycan. Residues 349-369 (LLVPFVQWFAGLSPTVWLSVI) form a helical membrane-spanning segment. The Intravirion portion of the chain corresponds to 370-375 (WMMWYW). A helical transmembrane segment spans residues 376–398 (GPSLYNILSPFLPLLPIFFCLWV). Residues 399-400 (YI) are Virion surface-facing.

The protein belongs to the orthohepadnavirus major surface antigen family. In terms of assembly, in its internal form (Li-HBsAg), interacts with the capsid protein and with the isoform S. Interacts with host chaperone CANX. As to quaternary structure, associates with host chaperone CANX through its pre-S2 N glycan; this association may be essential for isoform M proper secretion. Interacts with isoform L. Interacts with the antigens of satellite virus HDV (HDVAgs); this interaction is required for encapsidation of HDV genomic RNA. In terms of processing, isoform M is N-terminally acetylated by host at a ratio of 90%, and N-glycosylated by host at the pre-S2 region. Myristoylated.

It localises to the virion membrane. Its function is as follows. The large envelope protein exists in two topological conformations, one which is termed 'external' or Le-HBsAg and the other 'internal' or Li-HBsAg. In its external conformation the protein attaches the virus to cell receptors and thereby initiating infection. This interaction determines the species specificity and liver tropism. This attachment induces virion internalization predominantly through caveolin-mediated endocytosis. The large envelope protein also assures fusion between virion membrane and endosomal membrane. In its internal conformation the protein plays a role in virion morphogenesis and mediates the contact with the nucleocapsid like a matrix protein. Functionally, the middle envelope protein plays an important role in the budding of the virion. It is involved in the induction of budding in a nucleocapsid independent way. In this process the majority of envelope proteins bud to form subviral lipoprotein particles of 22 nm of diameter that do not contain a nucleocapsid. The polypeptide is Large envelope protein (Homo sapiens (Human)).